The chain runs to 107 residues: Nucleoid-associated protein BT_0257 (107 aa).

This sequence belongs to the YbaB/EbfC family. As to quaternary structure, homodimer.

It localises to the cytoplasm. It is found in the nucleoid. Functionally, binds to DNA and alters its conformation. May be involved in regulation of gene expression, nucleoid organization and DNA protection. In Bartonella tribocorum (strain CIP 105476 / IBS 506), this protein is Nucleoid-associated protein BT_0257.